A 589-amino-acid polypeptide reads, in one-letter code: MTVQTKTKGLAWQEKPLSDNERLKTESNFLRGTILDDLKDPLTGGFKGDNFQLIRFHGMYEQDDRDIRAERAEAKLEPLKFMLLRCRLPGGIIKPSQWIELDKFARENSHYRSIRLTNRQTFQFHGVPKAKLQTMHRLLHKLGLDSIATAADMNRNVLCTSNPIESELHRQAYEYAKKISEHLLPRTRGYLDVWVDGKKVQSSDDFLQEDEPILGKTYLPRKFKTAVVIPPLNDVDCYGNDLDFVAVSDGNGQLAGFNVLAGGGLSMEHGNTKTYPNISLELGFVPPEHALKAAEAVVTTQRDFGNRSDRKNARTRYTIQNMGLDNFRAEVERRMGMPFEPIRPFKFTGRGDRIGWVKGIDGNWHLTLFIESGRLVDEGGKQLLTGVLEIAKIHKGDFRITANQNLIVANVAEADKAKIEELARTYGLIRNDVSKLRENAMSCVSFPTCPLAMAEAERVLPDFIGELDKIMAKHGTSDDYIVTRITGCPNGCGRAMLAEIGLVGKAVGRYNLHIGGDREGVRIPRLYKENITLPEILSELDDLIGKWAAGRDTDEGFGDFAIRTGIVKPVLDAPVDFWDASKAVPIARA.

[4Fe-4S] cluster is bound by residues Cys-443, Cys-449, Cys-488, and Cys-492. Cys-492 contributes to the siroheme binding site.

It belongs to the nitrite and sulfite reductase 4Fe-4S domain family. As to quaternary structure, alpha(8)-beta(8). The alpha component is a flavoprotein, the beta component is a hemoprotein. The cofactor is siroheme. Requires [4Fe-4S] cluster as cofactor.

The catalysed reaction is hydrogen sulfide + 3 NADP(+) + 3 H2O = sulfite + 3 NADPH + 4 H(+). It functions in the pathway sulfur metabolism; hydrogen sulfide biosynthesis; hydrogen sulfide from sulfite (NADPH route): step 1/1. Component of the sulfite reductase complex that catalyzes the 6-electron reduction of sulfite to sulfide. This is one of several activities required for the biosynthesis of L-cysteine from sulfate. This Neisseria meningitidis serogroup C / serotype 2a (strain ATCC 700532 / DSM 15464 / FAM18) protein is Sulfite reductase [NADPH] hemoprotein beta-component.